The primary structure comprises 434 residues: Cyclic 2,3-diphosphoglycerate synthetase (434 aa).

It belongs to the cyclic 2,3-diphosphoglycerate synthetase family.

Its subcellular location is the cytoplasm. It catalyses the reaction (2R)-2,3-bisphosphoglycerate + ATP + H(+) = cyclic (2R)-2,3-bisphosphoglycerate + ADP + phosphate. Catalyzes the formation of cyclic 2,3-diphosphoglycerate (cDPG) by formation of an intramolecular phosphoanhydride bond at the expense of ATP. In Thermococcus sibiricus (strain DSM 12597 / MM 739), this protein is Cyclic 2,3-diphosphoglycerate synthetase.